A 317-amino-acid chain; its full sequence is Phospho-N-acetylmuramoyl-pentapeptide-transferase (317 aa).

9 helical membrane-spanning segments follow: residues 6–26 (IVMA…IIIP), 52–72 (PTIG…IMVG), 78–98 (AMIA…DDLL), 114–134 (MILL…YIGT), 145–165 (INFG…VTNA), 171–191 (GLDG…GIIS), 194–214 (LGHI…LAFL), 223–244 (VFMG…ALIL), and 297–317 (KIVS…FASL).

This sequence belongs to the glycosyltransferase 4 family. MraY subfamily. Mg(2+) is required as a cofactor.

Its subcellular location is the cell membrane. The enzyme catalyses UDP-N-acetyl-alpha-D-muramoyl-L-alanyl-gamma-D-glutamyl-meso-2,6-diaminopimeloyl-D-alanyl-D-alanine + di-trans,octa-cis-undecaprenyl phosphate = di-trans,octa-cis-undecaprenyl diphospho-N-acetyl-alpha-D-muramoyl-L-alanyl-D-glutamyl-meso-2,6-diaminopimeloyl-D-alanyl-D-alanine + UMP. Its pathway is cell wall biogenesis; peptidoglycan biosynthesis. In terms of biological role, catalyzes the initial step of the lipid cycle reactions in the biosynthesis of the cell wall peptidoglycan: transfers peptidoglycan precursor phospho-MurNAc-pentapeptide from UDP-MurNAc-pentapeptide onto the lipid carrier undecaprenyl phosphate, yielding undecaprenyl-pyrophosphoryl-MurNAc-pentapeptide, known as lipid I. The sequence is that of Phospho-N-acetylmuramoyl-pentapeptide-transferase from Clostridium perfringens (strain 13 / Type A).